We begin with the raw amino-acid sequence, 508 residues long: WD repeat-containing protein JIP5 (508 aa).

WD repeat units follow at residues 46–94, 105–144, 150–189, 194–234, 252–293, and 344–381; these read LATG…GVET, RHKG…VVKK, GQNV…QTNL, HNGD…EGDF, DQED…LADQ, and SKLD…QLTP. A disordered region spans residues 372-508; that stretch reads DSEKSEQLTP…THGIRRFEGL (137 aa). Basic and acidic residues predominate over residues 491-508; that stretch reads IKPERSMKTHGIRRFEGL.

Belongs to the WD repeat WDR55 family.

Its subcellular location is the nucleus. It localises to the nucleolus. This chain is WD repeat-containing protein JIP5 (JIP5), found in Eremothecium gossypii (strain ATCC 10895 / CBS 109.51 / FGSC 9923 / NRRL Y-1056) (Yeast).